A 419-amino-acid chain; its full sequence is Tol-Pal system protein TolB (419 aa).

The N-terminal stretch at 1–19 is a signal peptide; that stretch reads MFNRIISLFLLLFTGQVIA.

Belongs to the TolB family. The Tol-Pal system is composed of five core proteins: the inner membrane proteins TolA, TolQ and TolR, the periplasmic protein TolB and the outer membrane protein Pal. They form a network linking the inner and outer membranes and the peptidoglycan layer.

It is found in the periplasm. Its function is as follows. Part of the Tol-Pal system, which plays a role in outer membrane invagination during cell division and is important for maintaining outer membrane integrity. The sequence is that of Tol-Pal system protein TolB from Legionella pneumophila (strain Corby).